We begin with the raw amino-acid sequence, 300 residues long: Ribosomal RNA small subunit methyltransferase H (300 aa).

S-adenosyl-L-methionine-binding positions include 46-48, D65, F92, D107, and Q114; that span reads GGH.

It belongs to the methyltransferase superfamily. RsmH family.

The protein resides in the cytoplasm. The enzyme catalyses cytidine(1402) in 16S rRNA + S-adenosyl-L-methionine = N(4)-methylcytidine(1402) in 16S rRNA + S-adenosyl-L-homocysteine + H(+). Specifically methylates the N4 position of cytidine in position 1402 (C1402) of 16S rRNA. The sequence is that of Ribosomal RNA small subunit methyltransferase H from Prochlorococcus marinus (strain MIT 9301).